We begin with the raw amino-acid sequence, 321 residues long: Tet-like dioxygenase 1 (321 aa).

One can recognise a Fe2OG dioxygenase domain in the interval 198–298; sequence DSYYALNNCL…RIGLVYFAHK (101 aa). Asn-214 and Arg-224 together coordinate 2-oxoglutarate. Fe cation contacts are provided by His-229 and Asp-231. Tyr-242 serves as a coordination point for 2-oxoglutarate. A Fe cation-binding site is contributed by His-279. Residue Arg-289 participates in 2-oxoglutarate binding. Residue Gln-310 participates in substrate binding.

Requires Fe(2+) as cofactor.

It carries out the reaction a 5-methyl-2'-deoxycytidine in DNA + 2-oxoglutarate + O2 = a 5-hydroxymethyl-2'-deoxycytidine in DNA + succinate + CO2. It catalyses the reaction a 5-hydroxymethyl-2'-deoxycytidine in DNA + 2-oxoglutarate + O2 = a 5-formyl-2'-deoxycytidine in DNA + succinate + CO2 + H2O. The catalysed reaction is a 5-formyl-2'-deoxycytidine in DNA + 2-oxoglutarate + O2 = a 5-carboxyl-2'-deoxycytidine in DNA + succinate + CO2 + H(+). Dioxygenase that catalyzes the conversion of the modified genomic base 5-methylcytosine (5mC) into 5-hydroxymethylcytosine (5hmC), and thereby plays a role in active DNA demethylation. Also mediates subsequent conversion of 5hmC into 5-formylcytosine (5fC), and conversion of 5fC to 5-carboxylcytosine (5caC). This Naegleria gruberi (Amoeba) protein is Tet-like dioxygenase 1.